Here is a 2454-residue protein sequence, read N- to C-terminus: MERSRKHRALSITPHKQKQYMLDIEDNNVSTSSLTTTTTTTTTTTTTTSTTHNHESNERSNQLLESLIVLKEKIKLLDSTEKNHCITQGGITILIQCLCYCGKNSIKNDVIIEICQQLIDNSHDASRLFCKQIISHLYNDIECIGISDVLTKIISFYPLRSIFIEDLCIPKLLEIYYKCSLALSNIKFKVDPSIHINSTPVVQQSQQQLSNSSSSIPTSTSSPLQSSSSSSSSSATTASTASTTSSTTSNSSPTKTLGKQQQKQNSQQQQQQQQQQQQQQQQQQQQQQQQQQQQQQQQQQQKLNIHEFQSIQIPCWDDGVPPPPPQGFTFENLLTSVPIPRPPLFQQHQQSTTSNNNNNTIIQQSNTKSGDVTTPTSILSPISTITNNNNNVNSTNITPAPTPNLPSSVTSPISTSTNPPSNNPKPTSIGQIQSLHYHNPSLYQTPPLFNRNRGNNNNNNNDSNTSSPMDSPLISSTVASLNSNNSTAAATTTTTTTISTPTISTPSITSRVPPLPLSNSINNNNVNQIHPNNTPNSATSGGSISKVPMLSMGGIGGGGGGGSGGGGISKSIVPRLNLPVRVENSTRNTRSSRRRDDASNSTRSHQGELKIETSASKELSDLAIKLGETYMTADLTALISYKQAIESHKQSKRSIPSRRYDIPPISSKNTAALSMVNQQQSSFSELNLYKVRCNILKTLISSTSNNLMLLQYGNNPINILYSESILLHKGIIPSDKDHLTLFYKLASHWSDYVEYIHRNRWRDVTKGMGLERKASFRKKLDLLLWRINSSISNMLETFTFDDMEYQLCILSEYMENCPSRILSSQVVDVCIESLLKVKHSIFRGPITSDRVKDIHIIHYLLTVFDEIIKQNKSSPINDLFISIFLERDETFQFIKQYTIQILTNESIEREFSKCYPNDQNKIRLTEFRCRSIKHFSICVKMLKFKFKKQQENKLYNQHNCNNNNINNINNNNNNNNNNNNNNNNNNNNNNNNNNSNNSGSSGNLANNLNTPTSSQTNSSSTTTAGTNPTSTSTSSTTTGTNSTTTTTNENEIPDLLKKMEFLLLPQGNGVILPFLQSNNFFTHFNVKKQMLKFLNHVFLFKKNPFTKKKLYIDSYISYIYISFIKLYNNYIFDQATLTLCRLFLNILISFSVNKNDKISMKFYQLRTMDFLVREVNLEYEIKQNKDQFLKPLSSIPFFANSSDDTSSSSSTSSSLSLSTTTTTTTTTTTKTTTTTNTNSTTPIKTGGPPTIPKLATPGTKLNLGLNLSGITKTDNSSNNNNTSSPPVIPKLSLQPKIDSGSSTSSPSTLISTPSTLASTPPTTGVSSNPLIKPKFSLNLSSISKGSPASTSSSNLTTTTISSSSSSSNSTTTSLTTVPASTIIDSTSSTSTSTTTTTIGSVSTEPPLPAPPKPKFSLNLSSVSKTGQASTSTPNLLNLKNIPTTTNNSNSTTTTTTTTPTGKPQFSLNLSSLSKSSSSTETVPPSQPNQPISKPIIKSLNLGSISKGGSTTTTTTTTTPPPINNSNNTIASNNNEINLPKLSNSPINISSSKPPILIPKLVLPAIKIRSEEDTKQAGTGVLSSIEQKIDPQDPKFQLVLDNPSQSLTPSDRDSEQMIEPTENEIFNENQRYQLERNNRKLYHDRDLHISLLQLIFSLLLNSNQTLEHLYSDQFPIVAKKLNVPFILHLHINHQDNEKIIPELTKRTHEMGPNHFRILKLLFSRLYHSNLFKDLKRVAKGAYGTVYKGTLGNDEGLEIAVKLMPVPKTIHDRCVLYDIFTEILIMDTFRSDSRGCHMFDYGVDGENYWIVMKSYKCSLKEWRLKQTLPFLELLPLLLNIFTNVLQSVQFLGDHKINHFDIKCDNFLVHPLKKGTIEEDFWNQPTNDPNFAVCLADWGEAKVYTQDVEGYTTRNRGTEFIKSPEMLTIAYASQKTRENFDRRKKVGSNTASDVWSLGCLFYELLTGDFLFYDDDWVKFFIRVTQPGQELITPERKSKVANIPAILDYLDYVFIRDPFYRPTLRDLLTKFIAIKPTILSQWEQLKKKLDGHMSNQMNTVEKPKQYYNGGDGTSYKAKSIKFTGHYTPGRFLPHSYNANNPIKVGSLMVDGDKSTLEMPYEAAEFPEHRFYMDRPSKVASFMYISSFNPSMNKNMLINEYQITHIINCTGSPNAFPDHFEYLHLQLHDQPHQDITQSLSLAFDFIRDAIVHHGKVLICSDKGVSRSSALAIGYFMDSRSISYFEAFILVRDCRYIISPNTGFVEQLCRWGKQRRNFKGLSEWGGGETNSTLFQCLCGACSFTLLTPFDNRKYSNPKKCCCTPGSDLDCPNHIIGCSNFLGDMKKLHGYNNLNYLAWGYTNIINVVGDYERSSIEIVYNNNSNNINNNNNNNSNNSKSKQQQQQQQNQNIQQNNDWNLFKCKFCHFLTCAISKSTSGVNENLIAVVTNQRTNYFPSTLK.

The segment covering 31 to 51 (TSSLTTTTTTTTTTTTTTSTT) has biased composition (low complexity). Disordered regions lie at residues 31 to 57 (TSSL…HESN), 206 to 265 (QQQL…QKQN), 340 to 612 (PRPP…LKIE), 963 to 1051 (NNIN…NENE), 1201 to 1330 (SSDD…SNPL), and 1342 to 1528 (ISKG…SNNT). Residues 259–307 (KQQQKQNSQQQQQQQQQQQQQQQQQQQQQQQQQQQQQQQQQQQKLNIHE) adopt a coiled-coil conformation. Low complexity-rich tracts occupy residues 346–399 (QQHQ…NITP) and 406–428 (PSSV…KPTS). Residues 429-444 (IGQIQSLHYHNPSLYQ) show a composition bias toward polar residues. Composition is skewed to low complexity over residues 450-461 (NRNRGNNNNNNN) and 475-536 (SSTV…NTPN). Residues 553-568 (GGIGGGGGGGSGGGGI) show a composition bias toward gly residues. Composition is skewed to low complexity over residues 963 to 1048 (NNIN…TTTN), 1201 to 1248 (SSDD…TGGP), 1275 to 1284 (NSSNNNNTSS), 1299 to 1324 (SGSS…PTTG), and 1346 to 1403 (SPAS…SVST). The span at 1417 to 1441 (LNLSSVSKTGQASTSTPNLLNLKNI) shows a compositional bias: polar residues. Residues 1442 to 1478 (PTTTNNSNSTTTTTTTTPTGKPQFSLNLSSLSKSSSS) are compositionally biased toward low complexity. Residues 1479–1491 (TETVPPSQPNQPI) are compositionally biased toward polar residues. Residues 1509–1528 (STTTTTTTTTPPPINNSNNT) are compositionally biased toward low complexity. Positions 1730-2034 (FKDLKRVAKG…TKFIAIKPTI (305 aa)) constitute a Protein kinase domain. Residues 1736–1744 (VAKGAYGTV) and K1760 each bind ATP. The active-site Proton acceptor is D1858. The Tyrosine-protein phosphatase domain occupies 2130 to 2271 (RPSKVASFMY…LCRWGKQRRN (142 aa)). Residues 2379–2404 (NINNNNNNNSNNSKSKQQQQQQQNQN) form a disordered region.

This sequence belongs to the protein kinase superfamily. Ser/Thr protein kinase family.

The catalysed reaction is L-seryl-[protein] + ATP = O-phospho-L-seryl-[protein] + ADP + H(+). It catalyses the reaction L-threonyl-[protein] + ATP = O-phospho-L-threonyl-[protein] + ADP + H(+). This is Probable serine/threonine-protein kinase DDB_G0277071 from Dictyostelium discoideum (Social amoeba).